Here is a 337-residue protein sequence, read N- to C-terminus: MSLTLSNVILHQLTKNDQDEIEINLRNQVLDADSSTEGLVAELHRVYSSKGAKGFALFAEDSEFCHWLKQYRTGEMDFVTFSNQSAQRLQVELAKYPFAEAGTLVMAEYQSLATDYLFIGLLPTCHSMKVTEQLDISATDYLDVAKMDIVARIDLSSWETNSDSNRYLTFIKGRVGRKISDFFLDFLQAVVGLDAKEQNQVLMQAVEDFCADSRLDKEEKQQYRKQVYDYCNGQLQAGDEVAVKELAGELPPAEDGTNFYEFTSKQGYELEESFPADRTAMRKLTKFVGAGGGMSINFDSMLLGERIFYDAETDTLTIKGTPPNLKDQLLRRLNTDN.

It belongs to the YejK family.

It is found in the cytoplasm. The protein resides in the nucleoid. This chain is Nucleoid-associated protein PBPRA2585, found in Photobacterium profundum (strain SS9).